The chain runs to 195 residues: HTH-type transcriptional regulator BetI (195 aa).

In terms of domain architecture, HTH tetR-type spans 8–68; sequence SIRRRQLIDA…ATMRDITSQL (61 aa). Positions 31–50 form a DNA-binding region, H-T-H motif; sequence TIAQIARRAGVSTGIISHYF.

It participates in amine and polyamine biosynthesis; betaine biosynthesis via choline pathway [regulation]. Its function is as follows. Repressor involved in the biosynthesis of the osmoprotectant glycine betaine. It represses transcription of the choline transporter BetT and the genes of BetAB involved in the synthesis of glycine betaine. The protein is HTH-type transcriptional regulator BetI of Escherichia coli O127:H6 (strain E2348/69 / EPEC).